The following is a 692-amino-acid chain: uncharacterized protein (692 aa).

Response regulatory domains are found at residues 9 to 130 (RVLY…LRMC) and 139 to 255 (RILI…EYRM). 4-aspartylphosphate is present on residues D58 and D188. The GGDEF domain occupies 299–432 (GVHGLVIIDV…GGNQAHVWSA (134 aa)). The region spanning 443 to 691 (ESVIKRLVST…SFDFQHMSHD (249 aa)) is the EAL domain.

This is an uncharacterized protein from Thiocystis violacea.